The following is a 492-amino-acid chain: Probable endopolygalacturonase D (492 aa).

Positions 1-16 (MKRSALILSFLPLVFG) are cleaved as a signal peptide. Residues Cys151 and Cys166 are joined by a disulfide bond. 4 PbH1 repeats span residues 216 to 238 (GTSV…AYWD), 258 to 280 (MYNS…EIES), 281 to 319 (TEHL…DIKE), and 320 to 341 (SSYF…AVTS). The N-linked (GlcNAc...) asparagine glycan is linked to Asn292. Asp334 (proton donor) is an active-site residue. Cys336 and Cys352 form a disulfide bridge. His356 is an active-site residue. PbH1 repeat units follow at residues 371-392 (VNGV…RIKT), 400-422 (VYNI…DVQQ), and 434-478 (TNGV…SITG). N-linked (GlcNAc...) asparagine glycans are attached at residues Asn407 and Asn441. Cystine bridges form between Cys461–Cys466 and Cys484–Cys491.

It belongs to the glycosyl hydrolase 28 family.

It localises to the secreted. It catalyses the reaction (1,4-alpha-D-galacturonosyl)n+m + H2O = (1,4-alpha-D-galacturonosyl)n + (1,4-alpha-D-galacturonosyl)m.. Its function is as follows. Involved in maceration and soft-rotting of plant tissue. Hydrolyzes the 1,4-alpha glycosidic bonds of de-esterified pectate in the smooth region of the plant cell wall. In Aspergillus flavus (strain ATCC 200026 / FGSC A1120 / IAM 13836 / NRRL 3357 / JCM 12722 / SRRC 167), this protein is Probable endopolygalacturonase D (pgaD).